The primary structure comprises 546 residues: MFS-type transporter patC (546 aa).

The span at 1-15 (MSIDASPSESVLESQ) shows a compositional bias: polar residues. The tract at residues 1–29 (MSIDASPSESVLESQTPDRVDESIPIKAE) is disordered. The segment covering 16 to 29 (TPDRVDESIPIKAE) has biased composition (basic and acidic residues). 14 consecutive transmembrane segments (helical) span residues 41-61 (IVGF…LLYG), 89-109 (VGFT…YAIF), 113-133 (WLFL…GAAP), 143-163 (VWAG…ITIL), 171-191 (VYVG…PIIG), 203-223 (WSFY…VFLL), 245-265 (WVGT…IVFG), 277-297 (IALY…QYFC), 318-338 (LLLY…VYYI), 350-370 (GIMS…TILL), 379-399 (GYFI…AVLM), 416-436 (ILMG…PAIV), 447-467 (FMNI…SAIF), and 515-535 (VIVS…ALYV).

Belongs to the major facilitator superfamily. TCR/Tet family.

The protein localises to the vacuole membrane. Its subcellular location is the cell membrane. MFS-type transporter; part of the gene cluster that mediates the biosynthesis of patulin, an acetate-derived tetraketide mycotoxin produced by several fungal species that shows antimicrobial properties against several bacteria. May be involved in the secretion of E-ascladiol to be converted to patulin by the secreted patulin synthase patE. The chain is MFS-type transporter patC from Penicillium expansum (Blue mold rot fungus).